Here is a 241-residue protein sequence, read N- to C-terminus: MFLTRSEYDRGVNTFSPEGRLFQVEYALEAIKLGIGVQCEEGVVLAVEKRLTSPLLEPSSIQKVVEIDYHLICALSGLVADARTIIDHARIETQNHRFNYNEPMGVESCVQSICDLALRFGENRNSGEERMSRPFGVALLIAGIDEKGPSLYYSDPSGTFTQFHAKAIGAGSEGAQTTLQEKYSKTLTIAECQKLALTTLKQVMEEAITTTNVELAVITKADQKFKIYNKEELATVIQTLE.

Belongs to the peptidase T1A family. In terms of assembly, the 26S proteasome consists of a 20S proteasome core and two 19S regulatory subunits. The 20S proteasome core is composed of 28 subunits that are arranged in four stacked rings, resulting in a barrel-shaped structure. The two end rings are each formed by seven alpha subunits, and the two central rings are each formed by seven beta subunits. The catalytic chamber with the active sites is on the inside of the barrel.

The protein resides in the cytoplasm. Its subcellular location is the nucleus. Functionally, the proteasome is a multicatalytic proteinase complex which is characterized by its ability to cleave peptides with Arg, Phe, Tyr, Leu, and Glu adjacent to the leaving group at neutral or slightly basic pH. The proteasome has an ATP-dependent proteolytic activity. The chain is Proteasome subunit alpha type-5 (psmA5) from Dictyostelium discoideum (Social amoeba).